Here is a 400-residue protein sequence, read N- to C-terminus: Tryptophan synthase beta chain (400 aa).

Residue Lys-90 is modified to N6-(pyridoxal phosphate)lysine.

The protein belongs to the TrpB family. In terms of assembly, tetramer of two alpha and two beta chains. It depends on pyridoxal 5'-phosphate as a cofactor.

The catalysed reaction is (1S,2R)-1-C-(indol-3-yl)glycerol 3-phosphate + L-serine = D-glyceraldehyde 3-phosphate + L-tryptophan + H2O. The protein operates within amino-acid biosynthesis; L-tryptophan biosynthesis; L-tryptophan from chorismate: step 5/5. The beta subunit is responsible for the synthesis of L-tryptophan from indole and L-serine. The protein is Tryptophan synthase beta chain of Bacillus velezensis (strain DSM 23117 / BGSC 10A6 / LMG 26770 / FZB42) (Bacillus amyloliquefaciens subsp. plantarum).